The primary structure comprises 79 residues: Small ribosomal subunit protein bS21 (79 aa).

Positions 59-79 are disordered; sequence RKKMQREGLLPMKPKPVVGVR.

This sequence belongs to the bacterial ribosomal protein bS21 family.

This Methylocella silvestris (strain DSM 15510 / CIP 108128 / LMG 27833 / NCIMB 13906 / BL2) protein is Small ribosomal subunit protein bS21.